The following is a 233-amino-acid chain: Large ribosomal subunit protein mL67 (233 aa).

The tract at residues 214-233 is disordered; it reads RQQAQQSEQQSQSELESQTA. Over residues 215–233 the composition is skewed to low complexity; that stretch reads QQAQQSEQQSQSELESQTA.

This sequence belongs to the mitochondrion-specific ribosomal protein mL67 family.

Its subcellular location is the nucleus. It localises to the mitochondrion. In terms of biological role, transcription factor involved in regulation of RNA polymerase II-dependent transcription. Also involved in regulation of mitochondrial DNA recombination, maintenance and repair, and generation of homoplasmic cells. The chain is Large ribosomal subunit protein mL67 (MHR1) from Debaryomyces hansenii (strain ATCC 36239 / CBS 767 / BCRC 21394 / JCM 1990 / NBRC 0083 / IGC 2968) (Yeast).